The chain runs to 158 residues: Low molecular weight phosphotyrosine protein phosphatase (158 aa).

A2 carries the post-translational modification N-acetylalanine. The active-site Nucleophile is the C13. R19 is an active-site residue. D130 (proton donor) is an active-site residue. Residues Y132 and Y133 each carry the phosphotyrosine modification.

The protein belongs to the low molecular weight phosphotyrosine protein phosphatase family. In terms of assembly, interacts with EPHA2; dephosphorylates EPHA2. Interacts with EPHB1. As to quaternary structure, interacts with the SH3 domain of SPTAN1. There is no interaction observed for isoforms 2 or 3. Post-translationally, phosphorylated by LCK. Phosphorylation at Tyr-132 increases its phosphatase activity. In terms of processing, not phosphorylated. As to expression, expressed in T-lymphocytes.

It localises to the cytoplasm. It catalyses the reaction O-phospho-L-tyrosyl-[protein] + H2O = L-tyrosyl-[protein] + phosphate. The enzyme catalyses a phosphate monoester + H2O = an alcohol + phosphate. Its activity is regulated as follows. Inhibited by sulfhydryl reagents. Acts on tyrosine phosphorylated proteins, low-MW aryl phosphates and natural and synthetic acyl phosphates with differences in substrate specificity between isoform 1 and isoform 2. Functionally, does not possess phosphatase activity. The chain is Low molecular weight phosphotyrosine protein phosphatase from Homo sapiens (Human).